The following is a 325-amino-acid chain: tRNA N6-adenosine threonylcarbamoyltransferase (325 aa).

Residues His-107 and His-111 each contribute to the Fe cation site. Residues Leu-129–Gly-133, Asp-162, Gly-175, and Asn-265 contribute to the substrate site. Asp-293 contacts Fe cation.

This sequence belongs to the KAE1 / TsaD family. Requires Fe(2+) as cofactor.

The protein localises to the cytoplasm. The enzyme catalyses L-threonylcarbamoyladenylate + adenosine(37) in tRNA = N(6)-L-threonylcarbamoyladenosine(37) in tRNA + AMP + H(+). Required for the formation of a threonylcarbamoyl group on adenosine at position 37 (t(6)A37) in tRNAs that read codons beginning with adenine. Is involved in the transfer of the threonylcarbamoyl moiety of threonylcarbamoyl-AMP (TC-AMP) to the N6 group of A37, together with TsaE and TsaB. TsaD likely plays a direct catalytic role in this reaction. The polypeptide is tRNA N6-adenosine threonylcarbamoyltransferase (Sulfurimonas denitrificans (strain ATCC 33889 / DSM 1251) (Thiomicrospira denitrificans (strain ATCC 33889 / DSM 1251))).